We begin with the raw amino-acid sequence, 92 residues long: Large ribosomal subunit protein bL27 (92 aa).

A propeptide spanning residues 1 to 9 (MLVMNLQYF) is cleaved from the precursor.

The protein belongs to the bacterial ribosomal protein bL27 family. Post-translationally, the N-terminus is cleaved by ribosomal processing cysteine protease Prp.

This chain is Large ribosomal subunit protein bL27, found in Heliobacterium modesticaldum (strain ATCC 51547 / Ice1).